Here is a 257-residue protein sequence, read N- to C-terminus: Adenylate kinase (257 aa).

An ATP-binding site is contributed by 52 to 57 (GAGKGT). Residues 72 to 101 (ATGDMLRSQVAKKTELGKEAKKIMDQGGLV) form an NMP region. AMP-binding positions include Thr-73, Arg-78, 99-101 (GLV), 128-131 (GFPR), and Gln-135. The segment at 169-206 (GRLVHPASGRSYHKIFNPPKNDMKDDVTGEPLIQRSDD) is LID. Residues Arg-170 and 179–180 (SY) each bind ATP. Positions 203 and 214 each coordinate AMP. Gln-242 lines the ATP pocket.

This sequence belongs to the adenylate kinase family. AK2 subfamily. As to quaternary structure, monomer.

The protein resides in the cytoplasm. The protein localises to the cytosol. It localises to the mitochondrion intermembrane space. It catalyses the reaction AMP + ATP = 2 ADP. Catalyzes the reversible transfer of the terminal phosphate group between ATP and AMP. Plays an important role in cellular energy homeostasis and in adenine nucleotide metabolism. Adenylate kinase activity is critical for regulation of the phosphate utilization and the AMP de novo biosynthesis pathways. The sequence is that of Adenylate kinase (adk1) from Aspergillus fumigatus (strain CBS 144.89 / FGSC A1163 / CEA10) (Neosartorya fumigata).